The following is a 440-amino-acid chain: Xylose isomerase (440 aa).

Catalysis depends on residues H101 and D104. Mg(2+)-binding residues include E232, E268, H271, D296, D307, D309, and D339.

This sequence belongs to the xylose isomerase family. As to quaternary structure, homotetramer. It depends on Mg(2+) as a cofactor.

It localises to the cytoplasm. The enzyme catalyses alpha-D-xylose = alpha-D-xylulofuranose. This is Xylose isomerase from Salmonella agona (strain SL483).